A 479-amino-acid polypeptide reads, in one-letter code: Glutamate--tRNA ligase (479 aa).

The 'HIGH' region motif lies at 11 to 21; the sequence is PSPTGYLHIGG. The Zn(2+) site is built by Cys108, Cys110, Cys135, and Glu137. The 'KMSKS' region signature appears at 250-254; sequence KLSKR. Lys253 serves as a coordination point for ATP.

The protein belongs to the class-I aminoacyl-tRNA synthetase family. Glutamate--tRNA ligase type 1 subfamily. As to quaternary structure, monomer. Zn(2+) is required as a cofactor.

The protein resides in the cytoplasm. It catalyses the reaction tRNA(Glu) + L-glutamate + ATP = L-glutamyl-tRNA(Glu) + AMP + diphosphate. In terms of biological role, catalyzes the attachment of glutamate to tRNA(Glu) in a two-step reaction: glutamate is first activated by ATP to form Glu-AMP and then transferred to the acceptor end of tRNA(Glu). This is Glutamate--tRNA ligase from Myxococcus xanthus (strain DK1622).